Reading from the N-terminus, the 602-residue chain is Laccase 1 (602 aa).

A signal peptide spans 1–20; the sequence is MDHFARVSLVAALLYTNTWA. Plastocyanin-like domains follow at residues 30-128 and 157-345; these read TWEE…VRPK and YLVV…RIPN. Cu cation-binding residues include histidine 78, histidine 80, histidine 108, and histidine 110. Residues asparagine 176, asparagine 241, asparagine 264, asparagine 388, asparagine 430, asparagine 454, and asparagine 470 are each glycosylated (N-linked (GlcNAc...) asparagine). In terms of domain architecture, Plastocyanin-like 3 spans 461–584; it reads NEGLLLRTRN…GGMGMVIMDG (124 aa). Cu cation-binding residues include histidine 492, histidine 495, and histidine 497. A glycan (N-linked (GlcNAc...) asparagine) is linked at asparagine 512. Histidine 566, cysteine 567, histidine 568, and histidine 572 together coordinate Cu cation.

It belongs to the multicopper oxidase family. Cu cation serves as cofactor.

The protein resides in the cell surface. Its pathway is pigment biosynthesis. Laccase; part of the Pks1 gene cluster that mediates the biosynthesis of an anthraquinone derivative pigment that contributes to conidial pigmentation that provides protection from UV radiation, heat and cold stress. The polyketide synthase Pks1 produces 1-acetyl-2,4,6,8-tetrahydroxy-9,10-anthraquinone though condensation of acetyl-CoA with malonyl-CoA. The dehydratase EthD and the laccase Mlac1 further convert the anthraquinone derivative into the final conidial pigment. The chain is Laccase 1 from Metarhizium album (strain ARSEF 1941).